A 924-amino-acid polypeptide reads, in one-letter code: Ubiquitin carboxyl-terminal hydrolase 5 (924 aa).

The region spanning 15-145 is the DUSP domain; the sequence is LSPEEERVFI…GPTLARRVIS (131 aa). The segment covering 64–83 has biased composition (polar residues); sequence TNDGSSLSEHCDSPGSSTLK. The tract at residues 64 to 87 is disordered; the sequence is TNDGSSLSEHCDSPGSSTLKKPSR. One can recognise a USP domain in the interval 317–916; the sequence is TGLLNLGNTC…AAYVLFYRRK (600 aa). Cysteine 326 (nucleophile) is an active-site residue. Residues 648 to 667 show a composition bias toward basic and acidic residues; the sequence is REESVGKKGNSDSSIPERRS. The disordered stretch occupies residues 648 to 690; the sequence is REESVGKKGNSDSSIPERRSARFNNTEEEDKVGGLKKAKKSNS. Histidine 874 acts as the Proton acceptor in catalysis.

Belongs to the peptidase C19 family.

It carries out the reaction Thiol-dependent hydrolysis of ester, thioester, amide, peptide and isopeptide bonds formed by the C-terminal Gly of ubiquitin (a 76-residue protein attached to proteins as an intracellular targeting signal).. Its function is as follows. Recognizes and hydrolyzes the peptide bond at the C-terminal Gly of ubiquitin. Involved in the processing of poly-ubiquitin precursors as well as that of ubiquitinated proteins. The polypeptide is Ubiquitin carboxyl-terminal hydrolase 5 (UBP5) (Arabidopsis thaliana (Mouse-ear cress)).